The chain runs to 387 residues: Patatin group J-1 (387 aa).

The first 23 residues, 1 to 23 (MATTKSFLILIVMILATTSSTFA), serve as a signal peptide directing secretion. The region spanning 32 to 230 (LSIDGGGIKG…TVGDPALLSL (199 aa)) is the PNPLA domain. The GXGXXG motif lies at 36–41 (GGGIKG). A GXSXG motif is present at residues 75–79 (GTSTG). Ser77 serves as the catalytic Nucleophile. N-linked (GlcNAc...) asparagine glycosylation occurs at Asn115. Asp216 functions as the Proton acceptor in the catalytic mechanism. A DGA/G motif is present at residues 216 to 218 (DGG). Residues 322-385 (ENALTGTTTE…NRKKLRANKA (64 aa)) adopt a coiled-coil conformation.

This sequence belongs to the patatin family. As to expression, tuber.

The protein resides in the vacuole. Its function is as follows. Probable lipolytic acyl hydrolase (LAH), an activity which is thought to be involved in the response of tubers to pathogens. The polypeptide is Patatin group J-1 (Solanum tuberosum (Potato)).